Reading from the N-terminus, the 629-residue chain is tRNA uridine 5-carboxymethylaminomethyl modification enzyme MnmG (629 aa).

FAD is bound by residues 13–18 (GGGHAG), V125, and S180. 273–287 (GPRYCPSIEDKVMRF) serves as a coordination point for NAD(+). An FAD-binding site is contributed by Q370.

It belongs to the MnmG family. In terms of assembly, homodimer. Heterotetramer of two MnmE and two MnmG subunits. FAD serves as cofactor.

It is found in the cytoplasm. NAD-binding protein involved in the addition of a carboxymethylaminomethyl (cmnm) group at the wobble position (U34) of certain tRNAs, forming tRNA-cmnm(5)s(2)U34. In Shigella sonnei (strain Ss046), this protein is tRNA uridine 5-carboxymethylaminomethyl modification enzyme MnmG.